The following is a 1043-amino-acid chain: F-box DNA helicase 1 (1043 aa).

Residues 30–56 (QRWTNRDPNHGLYPKPRTKRGSRGQGS) form a disordered region. Residues 57–64 (QRCIPEFF) carry the PIP-box motif. Residues 101-191 (CALPQEGSAG…QDAGDVGPDP (91 aa)) form a disordered region. Ser-124 is subject to Phosphoserine. Residues 138 to 184 (SRWDGVSKKAPRHHLSVPCTRPREARQEAEDSTSRLSAESGETDQDA) form the F-box domain. Residues 158–170 (RPREARQEAEDST) show a composition bias toward basic and acidic residues. Residues 442 to 705 (THEQQLILNH…FYLTQSFRFG (264 aa)) form the UvrD-like helicase ATP-binding domain. Residue 463 to 470 (AFAGTGKT) coordinates ATP. The APIM motif motif lies at 807–811 (KFIRR).

The protein belongs to the helicase family. UvrD subfamily. Part of the SCF (SKP1-CUL1-F-box) E3 ubiquitin-protein ligase complex SCF(FBH1) composed of CUL1, SKP1, RBX1 and FBH1. Interacts with RAD51. Interacts with RPA2. Interacts (via PIP-box and RanBP2-type zinc finger) with PCNA. Ubiquitinated. Ubiquitination by the DCX(DTL) complex, also named CRL4(CDT2), leading to its degradation: ubiquitination takes place after its localization to DNA damage sites, possibly to facilitate the translesion synthesis (TLS) pathway.

It localises to the nucleus. Its subcellular location is the chromosome. The catalysed reaction is Couples ATP hydrolysis with the unwinding of duplex DNA by translocating in the 3'-5' direction.. It carries out the reaction ATP + H2O = ADP + phosphate + H(+). The protein operates within protein modification; protein ubiquitination. Functionally, 3'-5' DNA helicase and substrate-recognition component of the SCF(FBH1) E3 ubiquitin ligase complex that plays a key role in response to stalled/damaged replication forks. Involved in genome maintenance by acting as an anti-recombinogenic helicase and preventing extensive strand exchange during homologous recombination: promotes RAD51 filament dissolution from stalled forks, thereby inhibiting homologous recombination and preventing excessive recombination. Also promotes cell death and DNA double-strand breakage in response to replication stress: together with MUS81, promotes the endonucleolytic DNA cleavage following prolonged replication stress via its helicase activity, possibly to eliminate cells with excessive replication stress. Plays a major role in remodeling of stalled DNA forks by catalyzing fork regression, in which the fork reverses and the two nascent DNA strands anneal. In addition to the helicase activity, also acts as the substrate-recognition component of the SCF(FBH1) E3 ubiquitin ligase complex, a complex that mediates ubiquitination of RAD51, leading to regulate RAD51 subcellular location. The sequence is that of F-box DNA helicase 1 from Homo sapiens (Human).